The chain runs to 238 residues: Ribonuclease PH (238 aa).

Residues arginine 86 and 124–126 (GTR) contribute to the phosphate site.

It belongs to the RNase PH family. As to quaternary structure, homohexameric ring arranged as a trimer of dimers.

The enzyme catalyses tRNA(n+1) + phosphate = tRNA(n) + a ribonucleoside 5'-diphosphate. In terms of biological role, phosphorolytic 3'-5' exoribonuclease that plays an important role in tRNA 3'-end maturation. Removes nucleotide residues following the 3'-CCA terminus of tRNAs; can also add nucleotides to the ends of RNA molecules by using nucleoside diphosphates as substrates, but this may not be physiologically important. Probably plays a role in initiation of 16S rRNA degradation (leading to ribosome degradation) during starvation. The sequence is that of Ribonuclease PH from Erwinia tasmaniensis (strain DSM 17950 / CFBP 7177 / CIP 109463 / NCPPB 4357 / Et1/99).